A 1167-amino-acid polypeptide reads, in one-letter code: PH and Rap-GAP domain-containing protein DDB_G0271806 (1167 aa).

PH domains are found at residues 35 to 140 (NCVK…SSSL) and 165 to 257 (HVYL…SRIP). Residues 95 to 160 (GIDNNNCTNS…TNANTNNGLS (66 aa)) are disordered. A compositionally biased stretch (low complexity) spans 98–155 (NNNCTNSNSNNNNNNSDLIHLSAPSLSSSTSSTISPISSSSSLTTTTTTTTTTTNANT). Disordered stretches follow at residues 335–361 (SGGGSNNSSPSSLQSQQAKESGNGGSL), 376–400 (WRFSSSPSQGRVSIGGGGDRSSTQV), and 645–734 (YSRS…LEPE). The segment covering 340–351 (NNSSPSSLQSQQ) has biased composition (low complexity). The span at 648-676 (SEPNLQSCLSSSPSTRETMVPSSPSSHQL) shows a compositional bias: polar residues. The span at 687-732 (EQQLSSSSSSSSQQLQLQLQQQEQEQLLQEQPEAEQSQPEPQPQLE) shows a compositional bias: low complexity. Residues 950–1162 (LLSFEERQTT…RTRESLLNYY (213 aa)) enclose the Rap-GAP domain.

The protein is PH and Rap-GAP domain-containing protein DDB_G0271806 of Dictyostelium discoideum (Social amoeba).